Here is a 376-residue protein sequence, read N- to C-terminus: PqqA peptide cyclase (376 aa).

A Radical SAM core domain is found at 4-219 (VPPPLSVLLE…VETARRSLGD (216 aa)). Positions 18, 22, and 25 each coordinate [4Fe-4S] cluster.

It belongs to the radical SAM superfamily. PqqE family. In terms of assembly, interacts with PqqD. The interaction is necessary for activity of PqqE. It depends on [4Fe-4S] cluster as a cofactor.

The enzyme catalyses [PQQ precursor protein] + S-adenosyl-L-methionine = E-Y cross-linked-[PQQ precursor protein] + 5'-deoxyadenosine + L-methionine + H(+). The protein operates within cofactor biosynthesis; pyrroloquinoline quinone biosynthesis. Its function is as follows. Catalyzes the cross-linking of a glutamate residue and a tyrosine residue in the PqqA protein as part of the biosynthesis of pyrroloquinoline quinone (PQQ). The polypeptide is PqqA peptide cyclase (Xanthomonas campestris pv. campestris (strain B100)).